Consider the following 21-residue polypeptide: Mast cell protease 3 (21 aa).

Positions 1–21 constitute a Peptidase S1 domain; that stretch reads IIGGVESRPHSRPYMATLEIT. The tract at residues 1-21 is disordered; sequence IIGGVESRPHSRPYMATLEIT.

This sequence belongs to the peptidase S1 family. Granzyme subfamily.

Its function is as follows. Thrombin inactivating protease. Displays chymotrypsin-like substrate specificity. The chain is Mast cell protease 3 (Mcpt3) from Mus musculus (Mouse).